A 186-amino-acid chain; its full sequence is Large ribosomal subunit protein uL5 (186 aa).

The protein belongs to the universal ribosomal protein uL5 family. As to quaternary structure, part of the 50S ribosomal subunit; part of the 5S rRNA/L5/L18/L25 subcomplex. Contacts the 5S rRNA and the P site tRNA. Forms a bridge to the 30S subunit in the 70S ribosome.

Functionally, this is one of the proteins that bind and probably mediate the attachment of the 5S RNA into the large ribosomal subunit, where it forms part of the central protuberance. In the 70S ribosome it contacts protein S13 of the 30S subunit (bridge B1b), connecting the 2 subunits; this bridge is implicated in subunit movement. Contacts the P site tRNA; the 5S rRNA and some of its associated proteins might help stabilize positioning of ribosome-bound tRNAs. The chain is Large ribosomal subunit protein uL5 from Cereibacter sphaeroides (strain ATCC 17023 / DSM 158 / JCM 6121 / CCUG 31486 / LMG 2827 / NBRC 12203 / NCIMB 8253 / ATH 2.4.1.) (Rhodobacter sphaeroides).